The chain runs to 133 residues: MAEKITQYLGTGRRKTSVARVRLIPGGQGVEINGKAMDEYFGGRAILSRIVEQPLALTETLNKFAVKVNVVGGGNSGQAGAIRHGVARALLLADESLKEALREAGFLTRDSRMVERKKYGKKKARRSPQFSKR.

Residues 114-133 (VERKKYGKKKARRSPQFSKR) are disordered. Residues 118–133 (KYGKKKARRSPQFSKR) are compositionally biased toward basic residues.

This sequence belongs to the universal ribosomal protein uS9 family.

This Fusobacterium nucleatum subsp. nucleatum (strain ATCC 25586 / DSM 15643 / BCRC 10681 / CIP 101130 / JCM 8532 / KCTC 2640 / LMG 13131 / VPI 4355) protein is Small ribosomal subunit protein uS9.